Reading from the N-terminus, the 346-residue chain is Glycosyltransferase 1 domain-containing protein 1 (346 aa).

A signal peptide spans 1 to 16 (MRLLFLAVLRPHTGNA).

It belongs to the glycosyltransferase group 1 family. Glycosyltransferase 4 subfamily.

It is found in the secreted. The sequence is that of Glycosyltransferase 1 domain-containing protein 1 (GLT1D1) from Homo sapiens (Human).